Consider the following 247-residue polypeptide: Lysosomal membrane ascorbate-dependent ferrireductase CYB561A3 (247 aa).

Over 1–3 (MRG) the chain is Cytoplasmic. The helical transmembrane segment at 4-24 (IVGFYITYLLCLILGIACVVL) threads the bilayer. Positions 13-223 (LCLILGIACV…FGLVVLKILS (211 aa)) constitute a Cytochrome b561 domain. Over 25-46 (VVHWNFMYRDGFAWDGSSKNFN) the chain is Lumenal. Residues 47-67 (WHPVLMVTGMLVLYGNAAVVY) traverse the membrane as a helical segment. Heme b-binding residues include His-48 and Arg-68. Topologically, residues 68–82 (RIPLTWGHNKLPWKL) are cytoplasmic. L-ascorbate is bound by residues Lys-77 and Lys-81. The chain crosses the membrane as a helical span at residues 83–103 (LHAGLLLLSFIFSVIGLCAVF). Residues His-84, 113–116 (NLYS), and His-118 contribute to the heme b site. Residues 104 to 120 (NFHNVHHTANLYSLHSW) lie on the Lumenal side of the membrane. A helical transmembrane segment spans residues 121-141 (VGICTAALFTAQWVMGFTSFL). At 142–155 (LPCTPMAVRAFVKP) the chain is on the cytoplasmic side. Arg-150 contacts L-ascorbate. A helical membrane pass occupies residues 156–176 (THVWMGAMILVLSIVSCISGI). His-157 and Glu-178 together coordinate heme b. The Lumenal segment spans residues 177 to 201 (NEKLFFVLKETTNGTKPYSALPPEA). An N-linked (GlcNAc...) asparagine glycan is attached at Asn-189. The helical transmembrane segment at 202–222 (VAANSLGVIIVAFGLVVLKIL) threads the bilayer. The Cytoplasmic portion of the chain corresponds to 223–247 (SNQMWQRPEPGDDEGVYRPLAYDGS). Gln-228 contributes to the heme b binding site.

Homodimer. Heme b serves as cofactor.

The protein resides in the late endosome membrane. It is found in the lysosome membrane. It catalyses the reaction Fe(3+)(out) + L-ascorbate(in) = monodehydro-L-ascorbate radical(in) + Fe(2+)(out) + H(+). Transmembrane reductase that uses ascorbate as an electron donor in the cytoplasm and transfers electrons across membranes to reduce iron cations Fe(3+) into Fe(2+) in the lumen of the late endosome and lysosome. Reduced iron can then be extruded from the late endosome and lysosome to the cytoplasm by divalent metal-specific transporters. It is therefore most probably involved in endosomal and lysosomal cellular iron homeostasis. The protein is Lysosomal membrane ascorbate-dependent ferrireductase CYB561A3 (cyb561a3a) of Danio rerio (Zebrafish).